We begin with the raw amino-acid sequence, 249 residues long: tRNA (guanine-N(1)-)-methyltransferase (249 aa).

S-adenosyl-L-methionine is bound by residues Gly-112 and 132–137 (LGDFVL).

Belongs to the RNA methyltransferase TrmD family. Homodimer.

The protein localises to the cytoplasm. The enzyme catalyses guanosine(37) in tRNA + S-adenosyl-L-methionine = N(1)-methylguanosine(37) in tRNA + S-adenosyl-L-homocysteine + H(+). Functionally, specifically methylates guanosine-37 in various tRNAs. This chain is tRNA (guanine-N(1)-)-methyltransferase, found in Geobacter sp. (strain M21).